Reading from the N-terminus, the 442-residue chain is ATP-dependent protease ATPase subunit HslU (442 aa).

ATP is bound by residues Ile-18 and 60–65 (GVGKTE). The segment at 137–156 (PKPKNDWESTETDSSSNTRQ) is disordered. Positions 255, 320, and 392 each coordinate ATP.

The protein belongs to the ClpX chaperone family. HslU subfamily. In terms of assembly, a double ring-shaped homohexamer of HslV is capped on each side by a ring-shaped HslU homohexamer. The assembly of the HslU/HslV complex is dependent on binding of ATP.

Its subcellular location is the cytoplasm. In terms of biological role, ATPase subunit of a proteasome-like degradation complex; this subunit has chaperone activity. The binding of ATP and its subsequent hydrolysis by HslU are essential for unfolding of protein substrates subsequently hydrolyzed by HslV. HslU recognizes the N-terminal part of its protein substrates and unfolds these before they are guided to HslV for hydrolysis. The sequence is that of ATP-dependent protease ATPase subunit HslU from Shewanella baltica (strain OS155 / ATCC BAA-1091).